A 392-amino-acid polypeptide reads, in one-letter code: MRYITAGESHGPQLTAIIEGLPAGLEISPEMLDLQLARRQQGYGRGDRMKIERDRADILSGVRWGKTLGSPVTLVVKNRDWENWLEKMSPLAEHEGQAEAVTRPRPGHADLCGAMKYGHRDVRNILERSSARETAVRVAVGAVARGLLHALDIRIGGVVVEVGGVAAKPSAEPYPQQWAQAAASEMFCCDPAAELDMKRLIDHTKSIGDTLGGVVEVQVLGLPPGLGSHVQWDRKLDARLAMALMSIQAIKGVEIGLGFEAARRPGSKVHDEITWNPARLQQGELTPYQRPSNHAGGLEGGMTNGEPLVVRAAMKPIPTLYTPLQSVDIATHEPYEASVERSDTCAVPAALVVAEAVVAIELAQALLEKFGGDSLDEIRRNRDNYLAGLRDF.

2 residues coordinate NADP(+): arginine 39 and arginine 45. FMN is bound by residues 128-130, 248-249, glycine 300, 315-319, and arginine 341; these read RSS, QA, and KPIPT.

This sequence belongs to the chorismate synthase family. Homotetramer. Requires FMNH2 as cofactor.

It catalyses the reaction 5-O-(1-carboxyvinyl)-3-phosphoshikimate = chorismate + phosphate. It participates in metabolic intermediate biosynthesis; chorismate biosynthesis; chorismate from D-erythrose 4-phosphate and phosphoenolpyruvate: step 7/7. Functionally, catalyzes the anti-1,4-elimination of the C-3 phosphate and the C-6 proR hydrogen from 5-enolpyruvylshikimate-3-phosphate (EPSP) to yield chorismate, which is the branch point compound that serves as the starting substrate for the three terminal pathways of aromatic amino acid biosynthesis. This reaction introduces a second double bond into the aromatic ring system. The chain is Chorismate synthase from Trichlorobacter lovleyi (strain ATCC BAA-1151 / DSM 17278 / SZ) (Geobacter lovleyi).